The sequence spans 558 residues: MFECTPISILATFSGTVPEPIEADFPWLSLSILFPIFGSLVVPFIPDKGDGKTVRWYALGIALVTFLITVGAYLKGYDPSQEGLQLAERVSWLPDLGLTWAVGADGLSMPLILLTSFITALAVLAAWPVSFKPKLFFFLILAMDGGQIAVFAVQDMLLFFLAWELELLPVYLLLAIWGGKKRQYAATKFIIYTAGSSLFILLAALAMGFFGGGTPNFEFTHLANQDFGTGFQLLCYGGLLIAFGVKLPVVPLHTWLPDAHGEATAPVHMLLAGILLKMGGYALLRFNAQLLPAAHAQFAPLLIVLGVVNIIYAALTSFAQRNLKRKIAYSSISHMGFVLIGIGSFSSLGTSGAMLQMVSHGLIGASLFFLVGATYDRTRTLQLNEMGGVGQKMRIMFALWTTCSLASLALPGMSGFVSELMVFTGFVTDEVYTLPFRIVIAGLAAIGVILTPIYLLSMLREIFFGKENVEFLSNRELVDAEPREIYVIGSLLVPIIGIGLYPRIMTETYIASIDGLVERDKIAIEQMLKPSETISSNKNLSLITSSTPSLTPYKVRKS.

Helical transmembrane passes span 25–45 (FPWLSLSILFPIFGSLVVPFI), 56–76 (WYALGIALVTFLITVGAYLKG), 111–131 (LILLTSFITALAVLAAWPVSF), 133–153 (PKLFFFLILAMDGGQIAVFAV), 157–177 (LLFFLAWELELLPVYLLLAIW), 189–209 (FIIYTAGSSLFILLAALAMGF), 230–250 (GFQLLCYGGLLIAFGVKLPVV), 264–284 (TAPVHMLLAGILLKMGGYALL), 298–318 (FAPLLIVLGVVNIIYAALTSF), 327–347 (IAYSSISHMGFVLIGIGSFSS), 353–373 (AMLQMVSHGLIGASLFFLVGA), 395–417 (IMFALWTTCSLASLALPGMSGFV), 438–458 (IVIAGLAAIGVILTPIYLLSM), and 485–505 (IYVIGSLLVPIIGIGLYPRIM).

Belongs to the complex I subunit 4 family.

It is found in the cellular thylakoid membrane. The catalysed reaction is a plastoquinone + NADH + (n+1) H(+)(in) = a plastoquinol + NAD(+) + n H(+)(out). The enzyme catalyses a plastoquinone + NADPH + (n+1) H(+)(in) = a plastoquinol + NADP(+) + n H(+)(out). NDH-1 shuttles electrons from NAD(P)H, via FMN and iron-sulfur (Fe-S) centers, to quinones in the respiratory chain. The immediate electron acceptor for the enzyme in this species is believed to be plastoquinone. Couples the redox reaction to proton translocation (for every two electrons transferred, four hydrogen ions are translocated across the cytoplasmic membrane), and thus conserves the redox energy in a proton gradient. The chain is NAD(P)H-quinone oxidoreductase chain 4 from Prochlorococcus marinus (strain MIT 9211).